A 197-amino-acid polypeptide reads, in one-letter code: uncharacterized protein (197 aa).

Transmembrane regions (helical) follow at residues 12 to 41 (LCIF…WVLF), 78 to 100 (LIQG…TALS), 120 to 142 (VGVF…FGCV), and 162 to 184 (IRFA…IFRS).

The protein resides in the cell membrane. This is an uncharacterized protein from Treponema pallidum (strain Nichols).